The sequence spans 160 residues: Ureidoglycolate lyase (160 aa).

It belongs to the ureidoglycolate lyase family. In terms of assembly, homodimer. It depends on Ni(2+) as a cofactor.

It carries out the reaction (S)-ureidoglycolate = urea + glyoxylate. Its pathway is nitrogen metabolism; (S)-allantoin degradation. Catalyzes the catabolism of the allantoin degradation intermediate (S)-ureidoglycolate, generating urea and glyoxylate. Involved in the anaerobic utilization of allantoin as sole nitrogen source. Reinforces the induction of genes involved in the degradation of allantoin and glyoxylate by producing glyoxylate. This chain is Ureidoglycolate lyase, found in Escherichia coli O6:H1 (strain CFT073 / ATCC 700928 / UPEC).